A 157-amino-acid chain; its full sequence is Protein NrdI (157 aa).

Belongs to the NrdI family.

Probably involved in ribonucleotide reductase function. This chain is Protein NrdI, found in Mycoplasma mycoides subsp. mycoides SC (strain CCUG 32753 / NCTC 10114 / PG1).